A 467-amino-acid polypeptide reads, in one-letter code: Glutamate--tRNA ligase (467 aa).

The short motif at 9–19 is the 'HIGH' region element; it reads PSPTGNLHIGS. Positions 237–241 match the 'KMSKS' region motif; it reads KISKR. Lys240 serves as a coordination point for ATP.

Belongs to the class-I aminoacyl-tRNA synthetase family. Glutamate--tRNA ligase type 1 subfamily. In terms of assembly, monomer.

Its subcellular location is the cytoplasm. It carries out the reaction tRNA(Glu) + L-glutamate + ATP = L-glutamyl-tRNA(Glu) + AMP + diphosphate. Its function is as follows. Catalyzes the attachment of glutamate to tRNA(Glu) in a two-step reaction: glutamate is first activated by ATP to form Glu-AMP and then transferred to the acceptor end of tRNA(Glu). The protein is Glutamate--tRNA ligase of Buchnera aphidicola subsp. Acyrthosiphon pisum (strain APS) (Acyrthosiphon pisum symbiotic bacterium).